A 264-amino-acid polypeptide reads, in one-letter code: Catechol O-methyltransferase B (264 aa).

The signal sequence occupies residues 1 to 29 (MLGVLLCWCLGASVLLYVLYSWLIPAAVQ). Asn31 is a glycosylation site (N-linked (GlcNAc...) asparagine). S-adenosyl-L-methionine contacts are provided by Val92, Ser122, Glu140, and Asp191. Asp191 is a Mg(2+) binding site. Lys194 provides a ligand contact to substrate. Asp219 and Asn220 together coordinate Mg(2+). Substrate is bound by residues Asn220 and Glu249.

The protein belongs to the class I-like SAM-binding methyltransferase superfamily. Cation-dependent O-methyltransferase family. The cofactor is Mg(2+). In terms of tissue distribution, strongly expressed in eye, diencephalon, spinal cord, hindbrain, liver, kidney and telencephalon. Also detected at very low levels in muscle, spleen, anterior gut and heart. In eye, expressed strongly in retina. In brain, expressed in the central part of the telencephalon, the periventricular gray zone of the optic tectum, the periglomerular nucleus, the olfactory bulb, and the region adjacent to the diencephalic ventricle in the hypothalamus. Expressed in gill, with strongest expression in gill filaments nearest the gill arch, and in esophageal epithelium.

Its subcellular location is the secreted. It carries out the reaction a catechol + S-adenosyl-L-methionine = a guaiacol + S-adenosyl-L-homocysteine + H(+). Functionally, catalyzes the O-methylation, and thereby the inactivation, of catecholamine neurotransmitters and catechol hormones. The polypeptide is Catechol O-methyltransferase B (Danio rerio (Zebrafish)).